The chain runs to 452 residues: Probable 1,4-beta-D-glucan cellobiohydrolase A (452 aa).

Residues 1-17 form the signal peptide; the sequence is MHQRALLFSALAVAANA. Residue Asn-81 is glycosylated (N-linked (GlcNAc...) asparagine). The active-site Nucleophile is Glu-226. Residue Glu-231 is the Proton donor of the active site. A glycan (N-linked (GlcNAc...) asparagine) is linked at Asn-284. Residues 405-431 are disordered; the sequence is ADPSKPGVARGTCEHGAGDPENVESQH.

This sequence belongs to the glycosyl hydrolase 7 (cellulase C) family.

The protein localises to the secreted. It catalyses the reaction Hydrolysis of (1-&gt;4)-beta-D-glucosidic linkages in cellulose and cellotetraose, releasing cellobiose from the non-reducing ends of the chains.. Functionally, the biological conversion of cellulose to glucose generally requires three types of hydrolytic enzymes: (1) Endoglucanases which cut internal beta-1,4-glucosidic bonds; (2) Exocellobiohydrolases that cut the disaccharide cellobiose from the non-reducing end of the cellulose polymer chain; (3) Beta-1,4-glucosidases which hydrolyze the cellobiose and other short cello-oligosaccharides to glucose. The polypeptide is Probable 1,4-beta-D-glucan cellobiohydrolase A (cbhA) (Aspergillus fumigatus (strain CBS 144.89 / FGSC A1163 / CEA10) (Neosartorya fumigata)).